The following is a 298-amino-acid chain: Aclacinomycin methylesterase RdmC (298 aa).

The AB hydrolase-1 domain occupies 24–277; it reads PALLLVMGGN…LAEIPGMGHA (254 aa). Residues Ser-102, Asp-248, and His-276 contribute to the active site.

Belongs to the AB hydrolase superfamily. Hydrolase RdmC family. In terms of assembly, monomer.

The enzyme catalyses aclacinomycin T + H2O = 15-demethylaclacinomycin T + methanol. Its pathway is antibiotic biosynthesis; aclacinomycin biosynthesis. In terms of biological role, involved in the biosynthesis of the anthracycline aclacinomycin which is an aromatic polyketide antibiotic that exhibits high cytotoxicity and is widely applied in the chemotherapy of a variety of cancers. Catalyzes the removal of the methoxy group from the C-15 position of aclacinomycin T and A to yield 15-demethoxyaclacinomycin T and A, respectively. The chain is Aclacinomycin methylesterase RdmC (rdmC) from Streptomyces purpurascens.